A 132-amino-acid chain; its full sequence is Large ribosomal subunit protein bL17 (132 aa).

The protein belongs to the bacterial ribosomal protein bL17 family. In terms of assembly, part of the 50S ribosomal subunit. Contacts protein L32.

This chain is Large ribosomal subunit protein bL17, found in Cellvibrio japonicus (strain Ueda107) (Pseudomonas fluorescens subsp. cellulosa).